The following is a 1098-amino-acid chain: Early transcription factor large subunit homolog (1098 aa).

Positions 17 to 317 constitute a Helicase ATP-binding domain; the sequence is KGGRAFFPCD…PNGQPLQRQQ (301 aa). 64-71 serves as a coordination point for ATP; that stretch reads WQTGTGKS. Positions 246-249 match the DEAH box motif; it reads DEIH. The Helicase C-terminal domain maps to 489–689; it reads MMKDILSIIR…EGDKALRKHA (201 aa).

The protein belongs to the DEAD box helicase family. DEAH subfamily.

It is found in the virion. The enzyme catalyses ATP + H2O = ADP + phosphate + H(+). Functionally, putative initation factor. The sequence is that of Early transcription factor large subunit homolog from African swine fever virus (isolate Tick/Malawi/Lil 20-1/1983) (ASFV).